The sequence spans 341 residues: Phosphate acyltransferase (341 aa).

Belongs to the PlsX family. In terms of assembly, homodimer. Probably interacts with PlsY.

The protein localises to the cytoplasm. The catalysed reaction is a fatty acyl-[ACP] + phosphate = an acyl phosphate + holo-[ACP]. Its pathway is lipid metabolism; phospholipid metabolism. Its function is as follows. Catalyzes the reversible formation of acyl-phosphate (acyl-PO(4)) from acyl-[acyl-carrier-protein] (acyl-ACP). This enzyme utilizes acyl-ACP as fatty acyl donor, but not acyl-CoA. The chain is Phosphate acyltransferase from Aliivibrio salmonicida (strain LFI1238) (Vibrio salmonicida (strain LFI1238)).